Here is a 499-residue protein sequence, read N- to C-terminus: Putative lipase atg15 (499 aa).

Residues 1–9 lie on the Cytoplasmic side of the membrane; the sequence is MSIGEVSDS. The helical; Signal-anchor for type II membrane protein transmembrane segment at 10–30 threads the bilayer; sequence AGHLASLVLPIEVAPIAPLIP. Residues 31 to 499 lie on the Lumenal side of the membrane; the sequence is EPPATAEHIF…PDSPERNEEM (469 aa). N-linked (GlcNAc...) asparagine glycosylation is found at Asn-170, Asn-191, Asn-192, Asn-250, and Asn-274. Residue Ser-290 is the Charge relay system of the active site. An N-linked (GlcNAc...) asparagine glycan is attached at Asn-436. Residues 436–499 are disordered; sequence NGTETTTTSS…PDSPERNEEM (64 aa). Residues 438-454 are compositionally biased toward low complexity; sequence TETTTTSSAPTTTSISR.

It belongs to the AB hydrolase superfamily. Lipase family. As to quaternary structure, binds to both phosphatidylinositol (PI) and phosphatidylinositol 3,5-bisphosphate (PIP2).

It is found in the endosome. The protein localises to the multivesicular body membrane. It localises to the prevacuolar compartment membrane. The catalysed reaction is a triacylglycerol + H2O = a diacylglycerol + a fatty acid + H(+). In terms of biological role, lipase which is essential for lysis of subvacuolar cytoplasm to vacuole targeted bodies and intravacuolar autophagic bodies. Involved in the lysis of intravacuolar multivesicular body (MVB) vesicles. The intravacuolar membrane disintegration by atg15 is critical to life span extension. In Chaetomium globosum (strain ATCC 6205 / CBS 148.51 / DSM 1962 / NBRC 6347 / NRRL 1970) (Soil fungus), this protein is Putative lipase atg15 (atg15).